A 204-amino-acid polypeptide reads, in one-letter code: Large ribosomal subunit protein eL15 (204 aa).

Belongs to the eukaryotic ribosomal protein eL15 family. In terms of assembly, component of the large ribosomal subunit.

The protein resides in the cytoplasm. Functionally, component of the large ribosomal subunit. The ribosome is a large ribonucleoprotein complex responsible for the synthesis of proteins in the cell. This Hypophthalmichthys molitrix (Silver carp) protein is Large ribosomal subunit protein eL15 (rpl15).